The sequence spans 863 residues: Importin subunit beta-1 (863 aa).

HEAT repeat units lie at residues 2–31 (NAGEFLAQTLSPDANVRLNAEKQLENAART), 33–62 (FAQYMVLLAQELANDNSMPYIRMAAGLALK), 85–124 (VEIKQQVKSLALQTLGSSEHQAGQSAAQLVAAIAAYELAT), 129–159 (DLMVTLVANVGEGQPSALKQHSLQTIGYICE), 170–201 (SNAILTAVVAGARKEEPDAAVRLAALGALYDS), 212–248 (EYERNYIMQVVCEATQSPEASIQTAAFGCLVKIMHLY), 253–299 (PFYM…EIQE), 314–360 (FARA…QVVG), 364–392 (VNPVLAFVEQNIQNPDWHQREAAVMAFGS), 399–439 (VAML…SSFV), 449–481 (LSPMVSALLQGLTDNPRIVANCCWAFMNLVCHF), 496–530 (YEAIIGSLLHVTDQKGNENNSRTSGYETLGTLITF), 536–586 (LPMI…IIRR), 592–630 (RTSSDQIMNLLLQTMQTAPKQSVVHEDVLLAIGAMMNSL), 635–671 (EVYVPSFVPFLSSALSNEQEYQLCSVAVGLVGDLARA), 677–715 (LPYCDDFMTRLVQDLQSSVLDRNVKPAILSCFSDIALAI), 720–767 (QTYL…ITQA), 778–815 (QPYVHSMFTLLNMITADPECSESLTRAALGLLGDLAES), and 822–861 (KSYFAADWVAALLNSGKTKISSQQTKDLARWATEQVKRQA). Positions 21 to 101 (AEKQLENAAR…KSLALQTLGS (81 aa)) constitute an Importin N-terminal domain.

Belongs to the importin beta family. Importin beta-1 subfamily. In terms of assembly, forms a complex with an importin alpha subunit. Interacts with Ran; interacts specifically with the GTP-bound form of Ran (GTP-Ran), protecting it from GTP hydrolysis and nucleotide exchange. Interacts with nucleoporins.

The protein resides in the cytoplasm. It localises to the nucleus envelope. Its subcellular location is the nucleus. It is found in the nuclear pore complex. Functionally, importin beta subunit that functions in nuclear protein import through association with the importin alpha subunit, which binds to the clasical nuclear localization signal (cNLS) in cargo substrates. Docking of the importin/substrate complex to the nuclear pore complex (NPC) is mediated by importin beta through binding to nucleoporin FxFG repeats and the complex is subsequently translocated through the pore by an energy requiring, Ran-dependent mechanism. At the nucleoplasmic side of the NPC, GTP-Ran binds to importin beta and the three components separate, leading to release of the cargo. Importin alpha and beta are re-exported from the nucleus to the cytoplasm where GTP hydrolysis releases Ran from importin beta. The directionality of nuclear import is thought to be conferred by an asymmetric distribution of the GTP- and GDP-bound forms of Ran between the cytoplasm and nucleus. The sequence is that of Importin subunit beta-1 from Schizosaccharomyces pombe (strain 972 / ATCC 24843) (Fission yeast).